Here is a 526-residue protein sequence, read N- to C-terminus: Non-reducing end alpha-L-arabinofuranosidase BoGH43A (526 aa).

A signal peptide spans 1–20; sequence MRNALFLIFISLCSVCKSSA. The active-site Proton acceptor is the Asp-34. Glu-189 functions as the Proton donor in the catalytic mechanism.

The protein belongs to the glycosyl hydrolase 43 family.

It localises to the periplasm. The catalysed reaction is Hydrolysis of terminal non-reducing alpha-L-arabinofuranoside residues in alpha-L-arabinosides.. It functions in the pathway glucan metabolism; xyloglucan degradation. In terms of biological role, alpha-L-arabinofuranosidase involved in xyloglucan degradation by mediating the cleavage of terminal non-reducing alpha-L-arabinofuranoside residues in xyloglucan branches, converting the 'S' units to 'X' units. The polypeptide is Non-reducing end alpha-L-arabinofuranosidase BoGH43A (Bacteroides ovatus (strain ATCC 8483 / DSM 1896 / JCM 5824 / BCRC 10623 / CCUG 4943 / NCTC 11153)).